The primary structure comprises 252 residues: Ribosomal RNA small subunit methyltransferase NEP1 (252 aa).

S-adenosyl-L-methionine is bound by residues methionine 176, glycine 209, glycine 214, and 227-232 (ISNYPL).

It belongs to the class IV-like SAM-binding methyltransferase superfamily. RNA methyltransferase NEP1 family. Homodimer. Part of the small subunit (SSU) processome, composed of more than 70 proteins and the RNA chaperone small nucleolar RNA (snoRNA) U3.

The protein resides in the nucleus. The protein localises to the nucleolus. It catalyses the reaction a pseudouridine in rRNA + S-adenosyl-L-methionine = an N(1)-methylpseudouridine in rRNA + S-adenosyl-L-homocysteine + H(+). S-adenosyl-L-methionine-dependent pseudouridine N(1)-methyltransferase that methylates a pseudouridine in 18S rRNA. Involved the biosynthesis of the hypermodified N1-methyl-N3-(3-amino-3-carboxypropyl) pseudouridine (m1acp3-Psi) conserved in eukaryotic 18S rRNA. Also has an essential role in 40S ribosomal subunit biogenesis independent on its methyltransferase activity, facilitating the incorporation of ribosomal protein S19 during the formation of pre-ribosomes. Functionally, S-adenosyl-L-methionine-dependent pseudouridine N(1)-methyltransferase that methylates pseudouridine at position in 18S rRNA. Involved the biosynthesis of the hypermodified N1-methyl-N3-(3-amino-3-carboxypropyl) pseudouridine (m1acp3-Psi) conserved in eukaryotic 18S rRNA. Is not able to methylate uridine at this position. Also has an essential role in 40S ribosomal subunit biogenesis independent on its methyltransferase activity, facilitating the incorporation of ribosomal protein S19 during the formation of pre-ribosomes. Part of the small subunit (SSU) processome, first precursor of the small eukaryotic ribosomal subunit. During the assembly of the SSU processome in the nucleolus, many ribosome biogenesis factors, an RNA chaperone and ribosomal proteins associate with the nascent pre-rRNA and work in concert to generate RNA folding, modifications, rearrangements and cleavage as well as targeted degradation of pre-ribosomal RNA by the RNA exosome. In Drosophila melanogaster (Fruit fly), this protein is Ribosomal RNA small subunit methyltransferase NEP1.